Consider the following 461-residue polypeptide: Phosphatidate cytidylyltransferase 1 (461 aa).

A disordered region spans residues 1 to 68 (MLELRHRGGC…PEVPPSSDRT (68 aa)). Position 7 is an omega-N-methylarginine (R7). A compositionally biased stretch (basic and acidic residues) spans 22-56 (REGEAAGGDHETESTSDKETDIDDRYGDLDARGDS). Phosphoserine is present on residues S35 and S37. The next 6 helical transmembrane spans lie at 96 to 116 (MISLFFLIIYMGSFMLMLLVL), 149 to 169 (FLLCVNYFFYGETVADYFATF), 183 to 203 (HRFISFALYLAGFCMFVLSLV), 230 to 250 (LVIQNLFEGMIWFLVPISSVI), 279 to 299 (GFIGGFFSTVIFGFIAAYVLS), and 357 to 377 (IALSTFASLIGPFGGFFASGF).

This sequence belongs to the CDS family. Homodimer. Interacts with FOS; this interaction may enhance catalytic activity. Mg(2+) is required as a cofactor. In terms of tissue distribution, brain, retina and testis. Found in cerebellar Purkinje cells, pineal body, inner segment of photoreceptor cells and postmitotic spermatocytes and spermatids.

Its subcellular location is the endoplasmic reticulum membrane. The enzyme catalyses a 1,2-diacyl-sn-glycero-3-phosphate + CTP + H(+) = a CDP-1,2-diacyl-sn-glycerol + diphosphate. It catalyses the reaction 1-octadecanoyl-2-(5Z,8Z,11Z,14Z-eicosatetraenoyl)-sn-glycero-3-phosphate + CTP + H(+) = 1-octadecanoyl-2-(5Z,8Z,11Z,14Z-eicosatetraenoyl)-sn-glycero-3-cytidine-5'-diphosphate + diphosphate. The catalysed reaction is 1-octadecanoyl-2-(9Z,12Z-octadecadienoyl)-sn-glycero-3-phosphate + CTP + H(+) = 1-octadecanoyl-2-(9Z,12Z-octadecadienoyl)-sn-glycero-3-cytidine-5'-diphosphate + diphosphate. It carries out the reaction 1-hexadecanoyl-2-(5Z,8Z,11Z,14Z-eicosatetraenoyl)-sn-glycero-3-phosphate + CTP + H(+) = 1-hexadecanoyl-2-(5Z,8Z,11Z,14Z-eicosatetraenoyl)-sn-glycero-3-cytidine-5'-diphosphate + diphosphate. The enzyme catalyses 1,2-di-(5Z,8Z,11Z,14Z)-eicosatetraenoyl-sn-glycero-3-phosphate + CTP + H(+) = 1,2-di-(5Z,8Z,11Z,14Z-eicosatetraenoyl)-sn-glycero-3-cytidine-5'-diphosphate + diphosphate. It catalyses the reaction 1-octadecanoyl-2-(9Z-octadecenoyl)-sn-glycero-3-phosphate + CTP + H(+) = 1-octadecanoyl-2-(9Z-octadecenoyl)-sn-glycero-3-cytidine-5'-diphosphate + diphosphate. The catalysed reaction is 1-octadecanoyl-2-(4Z,7Z,10Z,13Z,16Z,19Z-docosahexaenoyl)-sn-glycero-3-phosphate + CTP + H(+) = 1-octadecanoyl-2-(4Z,7Z,10Z,13Z,16Z,19Z-docosahexaenoyl)-sn-glycero-3-cytidine-5'-diphosphate + diphosphate. It carries out the reaction 1,2-di-(9Z,12Z-octadecadienoyl)-sn-glycero-3-phosphate + CTP + H(+) = 1,2-di-(9Z,12Z-octadecadienoyl)-sn-glycero-3-cytidine-5'-diphosphate + diphosphate. The enzyme catalyses 1,2-di-(9Z-octadecenoyl)-sn-glycero-3-phosphate + CTP + H(+) = 1,2-di-(9Z-octadecenoyl)-sn-glycero-3-cytidine-5'-diphosphate + diphosphate. It functions in the pathway phospholipid metabolism; CDP-diacylglycerol biosynthesis; CDP-diacylglycerol from sn-glycerol 3-phosphate: step 3/3. Its activity is regulated as follows. Activated by GTP. Inhibited by CDP-diacylglycerol and by phosphatidylglycerol 4,5-bisphosphate (PPI2). Its function is as follows. Catalyzes the conversion of phosphatidic acid (PA) to CDP-diacylglycerol (CDP-DAG), an essential intermediate in the synthesis of phosphatidylglycerol, cardiolipin and phosphatidylinositol. Exhibits almost no acyl chain preference for PA, showing no discrimination for the sn-1/sn-2 acyl chain composition of PAs. Plays an important role in regulatinng the growth of lipid droplets which are storage organelles at the center of lipid and energy homeostasis. Positively regulates the differentiation and development of adipocytes. This Rattus norvegicus (Rat) protein is Phosphatidate cytidylyltransferase 1.